Reading from the N-terminus, the 288-residue chain is Phosphatidylserine decarboxylase proenzyme (288 aa).

Catalysis depends on charge relay system; for autoendoproteolytic cleavage activity residues Asp-95, His-152, and Ser-255. Catalysis depends on Ser-255, which acts as the Schiff-base intermediate with substrate; via pyruvic acid; for decarboxylase activity. Ser-255 is modified (pyruvic acid (Ser); by autocatalysis).

This sequence belongs to the phosphatidylserine decarboxylase family. PSD-B subfamily. Prokaryotic type I sub-subfamily. As to quaternary structure, heterodimer of a large membrane-associated beta subunit and a small pyruvoyl-containing alpha subunit. Requires pyruvate as cofactor. Post-translationally, is synthesized initially as an inactive proenzyme. Formation of the active enzyme involves a self-maturation process in which the active site pyruvoyl group is generated from an internal serine residue via an autocatalytic post-translational modification. Two non-identical subunits are generated from the proenzyme in this reaction, and the pyruvate is formed at the N-terminus of the alpha chain, which is derived from the carboxyl end of the proenzyme. The autoendoproteolytic cleavage occurs by a canonical serine protease mechanism, in which the side chain hydroxyl group of the serine supplies its oxygen atom to form the C-terminus of the beta chain, while the remainder of the serine residue undergoes an oxidative deamination to produce ammonia and the pyruvoyl prosthetic group on the alpha chain. During this reaction, the Ser that is part of the protease active site of the proenzyme becomes the pyruvoyl prosthetic group, which constitutes an essential element of the active site of the mature decarboxylase.

Its subcellular location is the cell membrane. The enzyme catalyses a 1,2-diacyl-sn-glycero-3-phospho-L-serine + H(+) = a 1,2-diacyl-sn-glycero-3-phosphoethanolamine + CO2. The protein operates within phospholipid metabolism; phosphatidylethanolamine biosynthesis; phosphatidylethanolamine from CDP-diacylglycerol: step 2/2. Catalyzes the formation of phosphatidylethanolamine (PtdEtn) from phosphatidylserine (PtdSer). In Methylococcus capsulatus (strain ATCC 33009 / NCIMB 11132 / Bath), this protein is Phosphatidylserine decarboxylase proenzyme.